A 70-amino-acid chain; its full sequence is Small ribosomal subunit protein bS21 (70 aa).

The span at 48-61 shows a compositional bias: basic residues; that stretch reads KLAAAVKRQSKRLR. Residues 48–70 form a disordered region; the sequence is KLAAAVKRQSKRLRSQQLPPKMY.

The protein belongs to the bacterial ribosomal protein bS21 family.

In Thiobacillus denitrificans (strain ATCC 25259 / T1), this protein is Small ribosomal subunit protein bS21.